We begin with the raw amino-acid sequence, 380 residues long: 1-deoxy-D-xylulose 5-phosphate reductoisomerase (380 aa).

8 residues coordinate NADPH: serine 10, glycine 11, serine 12, isoleucine 13, glycine 36, lysine 37, asparagine 38, and asparagine 120. Lysine 121 lines the 1-deoxy-D-xylulose 5-phosphate pocket. Glutamate 122 provides a ligand contact to NADPH. Mn(2+) is bound at residue aspartate 146. Positions 147, 148, 172, and 195 each coordinate 1-deoxy-D-xylulose 5-phosphate. A Mn(2+)-binding site is contributed by glutamate 148. Position 201 (glycine 201) interacts with NADPH. 4 residues coordinate 1-deoxy-D-xylulose 5-phosphate: serine 208, asparagine 213, lysine 214, and glutamate 217. Glutamate 217 provides a ligand contact to Mn(2+).

The protein belongs to the DXR family. Requires Mg(2+) as cofactor. Mn(2+) is required as a cofactor.

It catalyses the reaction 2-C-methyl-D-erythritol 4-phosphate + NADP(+) = 1-deoxy-D-xylulose 5-phosphate + NADPH + H(+). It functions in the pathway isoprenoid biosynthesis; isopentenyl diphosphate biosynthesis via DXP pathway; isopentenyl diphosphate from 1-deoxy-D-xylulose 5-phosphate: step 1/6. In terms of biological role, catalyzes the NADPH-dependent rearrangement and reduction of 1-deoxy-D-xylulose-5-phosphate (DXP) to 2-C-methyl-D-erythritol 4-phosphate (MEP). In Bacillus cereus (strain ATCC 10987 / NRS 248), this protein is 1-deoxy-D-xylulose 5-phosphate reductoisomerase.